The following is a 412-amino-acid chain: Class E basic helix-loop-helix protein 40 (412 aa).

Residues 1 to 21 are disordered; it reads MERIPSAQPPPTCLPKAPGLE. The essential for interaction with BMAL1, E-box binding and repressor activity against the CLOCK-BMAL1 heterodimer stretch occupies residues 1 to 139; it reads MERIPSAQPP…LSGRNVEAGQ (139 aa). Residues 52–107 enclose the bHLH domain; it reads TYKLPHRLIEKKRRDRINECIAQLKDLLPEHLKLTTLGHLEKAVVLELTLKHVKAL. The necessary for interaction with RXRA and repressor activity against RXRA stretch occupies residues 75 to 79; sequence LKDLL. The region spanning 142–175 is the Orange domain; it reads FCSGFQTCAREVLQYLAKHENTRDLKSSQLVTHL. Residue Lys159 forms a Glycyl lysine isopeptide (Lys-Gly) (interchain with G-Cter in SUMO1, SUMO2 and SUMO3) linkage. Lys167 participates in a covalent cross-link: Glycyl lysine isopeptide (Lys-Gly) (interchain with G-Cter in SUMO2). 2 disordered regions span residues 182–257 and 279–298; these read LLQG…LRVE and KQES…SDDE. Ser235 carries the phosphoserine modification. The segment covering 248–257 has biased composition (basic and acidic residues); it reads ESEKSELRVE. Residue Lys279 forms a Glycyl lysine isopeptide (Lys-Gly) (interchain with G-Cter in SUMO1); alternate linkage. A Glycyl lysine isopeptide (Lys-Gly) (interchain with G-Cter in SUMO1, SUMO2 and SUMO3); alternate cross-link involves residue Lys279. A Glycyl lysine isopeptide (Lys-Gly) (interchain with G-Cter in SUMO2); alternate cross-link involves residue Lys279. Lys288 participates in a covalent cross-link: Glycyl lysine isopeptide (Lys-Gly) (interchain with G-Cter in SUMO2). A Phosphoserine modification is found at Ser383.

As to quaternary structure, homodimer. Heterodimer with BHLHE41/DEC2. Interacts with TCF3/E47. Interacts with ubiquitin-conjugating enzyme UBE2I/UBC9. Interacts with HDAC1, SUMO1, RXRA and BMAL1. In terms of processing, ubiquitinated; which may lead to proteasomal degradation. Sumoylation inhibits its ubiquitination and promotes its negative regulation of the CLOCK-BMAL1 heterodimer transcriptional activator activity.

Its subcellular location is the cytoplasm. It localises to the nucleus. Functionally, transcriptional repressor involved in the regulation of the circadian rhythm by negatively regulating the activity of the clock genes and clock-controlled genes. Acts as the negative limb of a novel autoregulatory feedback loop (DEC loop) which differs from the one formed by the PER and CRY transcriptional repressors (PER/CRY loop). Both these loops are interlocked as it represses the expression of PER1/2 and in turn is repressed by PER1/2 and CRY1/2. Represses the activity of the circadian transcriptional activator: CLOCK-BMAL1|BMAL2 heterodimer by competing for the binding to E-box elements (5'-CACGTG-3') found within the promoters of its target genes. Negatively regulates its own expression and the expression of DBP and BHLHE41/DEC2. Acts as a corepressor of RXR and the RXR-LXR heterodimers and represses the ligand-induced RXRA and NR1H3/LXRA transactivation activity. May be involved in the regulation of chondrocyte differentiation via the cAMP pathway. Represses the transcription of NR0B2 and attentuates the transactivation of NR0B2 by the CLOCK-BMAL1 complex. Drives the circadian rhythm of blood pressure through transcriptional repression of ATP1B1 in the cardiovascular system. The protein is Class E basic helix-loop-helix protein 40 (BHLHE40) of Ovis aries (Sheep).